The primary structure comprises 91 residues: Protein SPATA45 homolog (91 aa).

A disordered region spans residues arginine 42–tyrosine 91. The span at glycine 51–aspartate 70 shows a compositional bias: polar residues. The span at proline 76 to tyrosine 91 shows a compositional bias: basic and acidic residues.

The protein belongs to the SPATA45 family.

This chain is Protein SPATA45 homolog, found in Nematostella vectensis (Starlet sea anemone).